We begin with the raw amino-acid sequence, 248 residues long: Mannose-binding protein C (248 aa).

The signal sequence occupies residues Met-1–Ser-20. Residues Gly-42–Asn-99 enclose the Collagen-like domain. The tract at residues Ile-43 to Ser-110 is disordered. Pro-47 is subject to 4-hydroxyproline. The segment covering Lys-49–Glu-61 has biased composition (basic and acidic residues). 4 positions are modified to 4-hydroxyproline: Pro-73, Pro-79, Pro-82, and Pro-88. Over residues Lys-75–Ser-87 the composition is skewed to pro residues. The stretch at Arg-112 to Leu-130 forms a coiled coil. The C-type lectin domain maps to Val-134–Glu-245. 2 cysteine pairs are disulfide-bonded: Cys-155–Cys-244 and Cys-222–Cys-236.

Oligomeric complex of 3 or more homotrimers. Interacts with MASP1 and MASP2. Interacts with MEP1A and MEP1B and may inhibit their catalytic activity. Hydroxylation on proline residues within the sequence motif, GXPG, is most likely to be 4-hydroxy as this fits the requirement for 4-hydroxylation in vertebrates.

Its subcellular location is the secreted. Functionally, calcium-dependent lectin involved in innate immune defense. Binds mannose, fucose and N-acetylglucosamine on different microorganisms and activates the lectin complement pathway. Binds to late apoptotic cells, as well as to apoptotic blebs and to necrotic cells, but not to early apoptotic cells, facilitating their uptake by macrophages. The polypeptide is Mannose-binding protein C (MBL2) (Nomascus concolor (Black crested gibbon)).